A 197-amino-acid polypeptide reads, in one-letter code: MAKNGLVICILVITLLLDQTTSHTSRLKARKHSKRRVRDKDGDLKTQIEKLWTEVNALKEIQALQTVCLRGTKVHKKCYLASEGLKHFHEANEDCISKGGILVIPRNSDEINALQDYGKRSLPGVNDFWLGINDMVTEGKFVDVNGIAISFLNWDRAQPNGGKRENCVLFSQSAQGKWSDEACRSSKRYICEFTIPQ.

An N-terminal signal peptide occupies residues 1–22 (MAKNGLVICILVITLLLDQTTS). 3 disulfide bridges follow: cysteine 68-cysteine 78, cysteine 95-cysteine 191, and cysteine 167-cysteine 183. In terms of domain architecture, C-type lectin spans 74-192 (VHKKCYLASE…CRSSKRYICE (119 aa)).

In terms of tissue distribution, restricted to cartilage and breast. Also expressed in breast cancers.

It is found in the secreted. Promotes cell adhesion to laminin-332 and fibronectin. This chain is C-type lectin domain family 3 member A (CLEC3A), found in Homo sapiens (Human).